We begin with the raw amino-acid sequence, 333 residues long: Holliday junction branch migration complex subunit RuvB (333 aa).

Residues 1–182 are large ATPase domain (RuvB-L); that stretch reads MDERLLSGES…FGVLSRLEYY (182 aa). ATP-binding positions include L21, R22, G63, K66, T67, T68, 129 to 131, R172, Y182, and R219; that span reads EDF. T67 lines the Mg(2+) pocket. The small ATPAse domain (RuvB-S) stretch occupies residues 183–253; it reads TVDQLSEIVE…ITQMALELLQ (71 aa). The head domain (RuvB-H) stretch occupies residues 256–333; that stretch reads KLGLDHIDHK…EHFGMEMPKV (78 aa). Residues R311 and R316 each contribute to the DNA site.

This sequence belongs to the RuvB family. Homohexamer. Forms an RuvA(8)-RuvB(12)-Holliday junction (HJ) complex. HJ DNA is sandwiched between 2 RuvA tetramers; dsDNA enters through RuvA and exits via RuvB. An RuvB hexamer assembles on each DNA strand where it exits the tetramer. Each RuvB hexamer is contacted by two RuvA subunits (via domain III) on 2 adjacent RuvB subunits; this complex drives branch migration. In the full resolvosome a probable DNA-RuvA(4)-RuvB(12)-RuvC(2) complex forms which resolves the HJ.

The protein resides in the cytoplasm. The enzyme catalyses ATP + H2O = ADP + phosphate + H(+). In terms of biological role, the RuvA-RuvB-RuvC complex processes Holliday junction (HJ) DNA during genetic recombination and DNA repair, while the RuvA-RuvB complex plays an important role in the rescue of blocked DNA replication forks via replication fork reversal (RFR). RuvA specifically binds to HJ cruciform DNA, conferring on it an open structure. The RuvB hexamer acts as an ATP-dependent pump, pulling dsDNA into and through the RuvAB complex. RuvB forms 2 homohexamers on either side of HJ DNA bound by 1 or 2 RuvA tetramers; 4 subunits per hexamer contact DNA at a time. Coordinated motions by a converter formed by DNA-disengaged RuvB subunits stimulates ATP hydrolysis and nucleotide exchange. Immobilization of the converter enables RuvB to convert the ATP-contained energy into a lever motion, pulling 2 nucleotides of DNA out of the RuvA tetramer per ATP hydrolyzed, thus driving DNA branch migration. The RuvB motors rotate together with the DNA substrate, which together with the progressing nucleotide cycle form the mechanistic basis for DNA recombination by continuous HJ branch migration. Branch migration allows RuvC to scan DNA until it finds its consensus sequence, where it cleaves and resolves cruciform DNA. The sequence is that of Holliday junction branch migration complex subunit RuvB from Bacillus cereus (strain ATCC 10987 / NRS 248).